The chain runs to 332 residues: Ubiquinone biosynthesis protein COQ4, mitochondrial (332 aa).

The transit peptide at 1 to 24 directs the protein to the mitochondrion; that stretch reads MLRLGVSRTPINRQFVGYEQRRHF. His-210, Asp-211, His-214, and Glu-226 together coordinate Zn(2+).

This sequence belongs to the COQ4 family. Component of a multi-subunit COQ enzyme complex, composed of at least COQ3, COQ4, COQ5, COQ6, COQ7 and COQ9. Zn(2+) is required as a cofactor.

The protein resides in the mitochondrion inner membrane. It catalyses the reaction a 4-hydroxy-3-methoxy-5-(all-trans-polyprenyl)benzoate + H(+) = a 2-methoxy-6-(all-trans-polyprenyl)phenol + CO2. It participates in cofactor biosynthesis; ubiquinone biosynthesis. Lyase that catalyzes the C1-decarboxylation of 4-hydroxy-3-methoxy-5-(all-trans-polyprenyl)benzoic acid into 2-methoxy-6-(all-trans-polyprenyl)phenol during ubiquinone biosynthesis. This Zygosaccharomyces rouxii (strain ATCC 2623 / CBS 732 / NBRC 1130 / NCYC 568 / NRRL Y-229) protein is Ubiquinone biosynthesis protein COQ4, mitochondrial.